The sequence spans 144 residues: uncharacterized protein (144 aa).

This is an uncharacterized protein from Vibrio parahaemolyticus serotype O3:K6 (strain RIMD 2210633).